We begin with the raw amino-acid sequence, 116 residues long: Ly-6/neurotoxin-like protein 1 (116 aa).

The N-terminal stretch at 1 to 20 is a signal peptide; it reads MTPLLTLILVVLMGLPLAQA. One can recognise a UPAR/Ly6 domain in the interval 21–107; that stretch reads LDCHVCAYNG…TPATLALAPI (87 aa). Cystine bridges form between cysteine 23/cysteine 46, cysteine 26/cysteine 33, cysteine 39/cysteine 64, cysteine 68/cysteine 85, and cysteine 86/cysteine 91. The GPI-anchor amidated cysteine moiety is linked to residue cysteine 91. The propeptide at 92 to 116 is removed in mature form; it reads NGTGLATPATLALAPILLATLWGLL.

In terms of assembly, interacts with nAChRs containing alpha-4:beta-2 (CHRNA4:CHRNB2) and alpha-7 (CHRNA7) subunits. Interacts with CHRNA4 probably in the endoplasmic reticulum prior to nAChR pentameric assembly. Interacts with KCNA2/Potassium voltage-gated channel subfamily A member 2.

It localises to the cell membrane. It is found in the cell projection. Its subcellular location is the dendrite. The protein localises to the endoplasmic reticulum. Functionally, acts in different tissues through interaction to nicotinic acetylcholine receptors (nAChRs). The proposed role as modulator of nAChR activity seems to be dependent on the nAChR subtype and stoichiometry, and to involve an effect on nAChR trafficking and its cell surface expression, and on single channel properties of the nAChR inserted in the plasma membrane. Modulates functional properties of nicotinic acetylcholine receptors (nAChRs) to prevent excessive excitation, and hence neurodegeneration. Enhances desensitization by increasing both the rate and extent of desensitization of alpha-4:beta-2-containing nAChRs and slowing recovery from desensitization. Promotes large amplitude ACh-evoked currents through alpha-4:beta-2 nAChRs. Is involved in regulation of the nAChR pentameric assembly in the endoplasmic reticulum. Shifts stoichiometry from high sensitivity alpha-4(2):beta-2(3) to low sensitivity alpha-4(3):beta-2(2) nAChR. In vitro modulates alpha-3:beta-4-containing nAChRs. Reduces cell surface expression of (alpha-3:beta-4)(2):beta-4 and (alpha-3:beta-4)(2):alpha-5 nAChRs suggesting an interaction with nAChR alpha-3(-):(+)beta-4 subunit interfaces and an allosteric mode. Corresponding single channel effects characterized by decreased unitary conductance, altered burst proportions and enhanced desensitization/inactivation seem to depend on nAChR alpha:alpha subunit interfaces and are greater in (alpha-3:beta-2)(2):alpha-3 when compared to (alpha-3:beta-2)(2):alpha-5 nAChRs. Prevents plasticity in the primary visual cortex late in life. This chain is Ly-6/neurotoxin-like protein 1, found in Homo sapiens (Human).